The primary structure comprises 216 residues: Protein ADP-ribose pyrophosphatase ORF38 (216 aa).

Residues 1 to 177 enclose the Nudix hydrolase domain; that stretch reads MRNAAGLFMI…DYSNYIEFFD (177 aa). A Nudix box motif is present at residues 48–70; it reads GHRDCCDAKVYETAVREFVEETG.

The protein localises to the host cytoplasm. It is found in the host nucleus. It carries out the reaction ADP-D-ribose + H2O = D-ribose 5-phosphate + AMP + 2 H(+). Its function is as follows. Plays an important role in virus replication most probably through its hydrolyzing ADP-ribose activity in host cells. May function in viral DNA replication or transcription directly, or by removing toxic substances or metabolic intermediates. The polypeptide is Protein ADP-ribose pyrophosphatase ORF38 (Lepidoptera (butterflies and moths)).